Reading from the N-terminus, the 351-residue chain is F-box protein At1g47810 (351 aa).

Positions 8–54 (LQSLDPIPVDVLFEIFLNLPAKFLARFVCVSKLWAKIIRNQDFIRSF) constitute an F-box domain.

This is F-box protein At1g47810 from Arabidopsis thaliana (Mouse-ear cress).